A 361-amino-acid polypeptide reads, in one-letter code: MTPTLRRKLEALAERREELQHLLSDPDVVGNNDTFRTLSRELSQLEPVAMALEEEARAKADLATAEALRNDPEMRELAEEEIAAAQARLEQLDAQLASLLVPRDPRDDGNLFLEVRAGTGGDEAAIFAGDLFRMYARYAERQGWKVEIESDSPGEHGGYKEVVARVVGRGAYSRLKFESGTHRVQRVPATESQGRIHTSAATVAIIPEADDVEEITINPADLKVDTFRSSGAGGQHVNKTESAIRITHVPSGVVVECQTERSQHANRDKAMKRLKAQLLDAERSKAAAAEAQTRKLQVGSGDRSQRIRTYSFPQGRITDHRVEGLTLYDLPNIIEGDLDALIGRLLHEHQADELARLSDSP.

Residue Gln235 is modified to N5-methylglutamine.

This sequence belongs to the prokaryotic/mitochondrial release factor family. In terms of processing, methylated by PrmC. Methylation increases the termination efficiency of RF1.

The protein localises to the cytoplasm. In terms of biological role, peptide chain release factor 1 directs the termination of translation in response to the peptide chain termination codons UAG and UAA. This chain is Peptide chain release factor 1, found in Xanthomonas euvesicatoria pv. vesicatoria (strain 85-10) (Xanthomonas campestris pv. vesicatoria).